A 366-amino-acid chain; its full sequence is MEKITVTLGERSYPITIAKGLFDDPSAFAPLKAGQQVMLVTNQTLAPLYLAKVKATLQQARIRVDEVILPDGEQYKSLSVLNDVFSALLENSHSRDTTLIALGGGVIGDLTGFAAACYQRGVRFIQMPTTLLAQVDSSVGGKTAVNHPFGKNMIGAFYQPASVMVDLNCLQTLPARELSSGLAEVIKYGIILDSAFFSWLEDNMDKLLALDNQAMAHCIRRCCELKAEVVAADEKELSGLRALLNLGHTFGHAIETEMGYGVWLHGEAVSAGMVMAARTAQLIDNFSEQDTQRIIRLLERANLPVHGPQNMPPEAYLPHMMRDKKVIAGKLRLVLPTKIGKADLRSDIEHNCVVDAILQCLPYENV.

Residues 71-76 (DGEQYK), 105-109 (GVIGD), 129-130 (TT), Lys142, Lys151, and 169-172 (CLQT) each bind NAD(+). Residues Glu184, His248, and His265 each coordinate Zn(2+).

The protein belongs to the sugar phosphate cyclases superfamily. Dehydroquinate synthase family. The cofactor is NAD(+). Co(2+) serves as cofactor. It depends on Zn(2+) as a cofactor.

Its subcellular location is the cytoplasm. The enzyme catalyses 7-phospho-2-dehydro-3-deoxy-D-arabino-heptonate = 3-dehydroquinate + phosphate. Its pathway is metabolic intermediate biosynthesis; chorismate biosynthesis; chorismate from D-erythrose 4-phosphate and phosphoenolpyruvate: step 2/7. In terms of biological role, catalyzes the conversion of 3-deoxy-D-arabino-heptulosonate 7-phosphate (DAHP) to dehydroquinate (DHQ). This is 3-dehydroquinate synthase from Photorhabdus laumondii subsp. laumondii (strain DSM 15139 / CIP 105565 / TT01) (Photorhabdus luminescens subsp. laumondii).